We begin with the raw amino-acid sequence, 527 residues long: Bromodomain-containing protein 9 (527 aa).

Positions 1–16 (MNVSVTKRRKKKKKKK) are enriched in basic residues. The disordered stretch occupies residues 1 to 54 (MNVSVTKRRKKKKKKKSEKEKDKYLDEDERRRRKEEKKRKREKEQCDSEGETEV). Over residues 17–30 (SEKEKDKYLDEDER) the composition is skewed to basic and acidic residues. Positions 31 to 41 (RRRKEEKKRKR) are enriched in basic residues. Residues 78-182 (NESTPLQQLL…HTGFKMMSKA (105 aa)) form the Bromo domain. The interval 156 to 158 (TYN) is histone H4K5ac H4K8ac and histone H4K5bu H4K8bu binding. Basic and acidic residues predominate over residues 468–478 (DFHDVHNDRGG). Positions 468–527 (DFHDVHNDRGGSRPSSSSSMSNNSERDHHLGSPSRISVGEQQDIHDPYEFLQSPETDNQN) are disordered. Low complexity predominate over residues 479 to 490 (SRPSSSSSMSNN).

In terms of assembly, binds acetylated histones H3 and H4. Binds butyrylated histone H4.

The protein localises to the nucleus. In terms of biological role, plays a role in chromatin remodeling and regulation of transcription. Acts as a chromatin reader that recognizes and binds acylated histones: binds histones that are acetylated and/or butyrylated. The protein is Bromodomain-containing protein 9 (brd9) of Xenopus laevis (African clawed frog).